Consider the following 329-residue polypeptide: Interleukin-12 subunit beta (329 aa).

The N-terminal stretch at 1–22 (MHPQQLVIAWLSLVLLAPPLMA) is a signal peptide. Residues 23-106 (IWELEKNVYV…LSHSFLLIHK (84 aa)) enclose the Ig-like C2-type domain. An intrachain disulfide couples Cys50 to Cys90. N-linked (GlcNAc...) asparagine glycosylation is found at Asn135 and Asn223. The region spanning 238–329 (PPKNLQLKPL…WSNWASVSCS (92 aa)) is the Fibronectin type-III domain.

This sequence belongs to the IL-12B family. Heterodimer with IL12A; disulfide-linked. The heterodimer is known as interleukin IL-12. Heterodimer with IL23A; disulfide-linked. The heterodimer is known as interleukin IL-23. Also secreted as a monomer. Interacts with NBR1; this interaction promotes IL-12 secretion.

It localises to the secreted. In terms of biological role, cytokine that can act as a growth factor for activated T and NK cells, enhance the lytic activity of NK/lymphokine-activated killer cells, and stimulate the production of IFN-gamma by resting PBMC. Functionally, associates with IL23A to form the IL-23 interleukin, a heterodimeric cytokine which functions in innate and adaptive immunity. IL-23 may constitute with IL-17 an acute response to infection in peripheral tissues. IL-23 binds to a heterodimeric receptor complex composed of IL12RB1 and IL23R, activates the Jak-Stat signaling cascade, stimulates memory rather than naive T-cells and promotes production of pro-inflammatory cytokines. IL-23 induces autoimmune inflammation and thus may be responsible for autoimmune inflammatory diseases and may be important for tumorigenesis. This is Interleukin-12 subunit beta (IL12B) from Felis catus (Cat).